Consider the following 313-residue polypeptide: Malate dehydrogenase (313 aa).

Residues 8-13 (GAGNVG) and aspartate 33 each bind NAD(+). Substrate contacts are provided by arginine 83 and arginine 89. Residues asparagine 96 and 119–121 (ISN) each bind NAD(+). Asparagine 121 and arginine 152 together coordinate substrate. The active-site Proton acceptor is the histidine 176.

The protein belongs to the LDH/MDH superfamily. MDH type 3 family.

It catalyses the reaction (S)-malate + NAD(+) = oxaloacetate + NADH + H(+). Catalyzes the reversible oxidation of malate to oxaloacetate. The sequence is that of Malate dehydrogenase from Bacteroides thetaiotaomicron (strain ATCC 29148 / DSM 2079 / JCM 5827 / CCUG 10774 / NCTC 10582 / VPI-5482 / E50).